Here is a 547-residue protein sequence, read N- to C-terminus: Membrane protein insertase YidC (547 aa).

Residues 8 to 28 form a helical membrane-spanning segment; it reads LRLILAIALSFLFIALYSYFF. Positions 37 to 50 are enriched in low complexity; it reads QTTKQETTNNHTAT. The interval 37-62 is disordered; sequence QTTKQETTNNHTATSPNAPNAQHFST. Positions 51-62 are enriched in polar residues; the sequence is SPNAPNAQHFST. Transmembrane regions (helical) follow at residues 325–345, 348–368, 414–434, 449–469, and 495–515; these read VIEY…LDYL, FVGN…IILY, GANP…FFAI, WILW…PLLM, and LLPL…VLYW.

The protein belongs to the OXA1/ALB3/YidC family. Type 1 subfamily. Interacts with the Sec translocase complex via SecD. Specifically interacts with transmembrane segments of nascent integral membrane proteins during membrane integration.

The protein resides in the cell inner membrane. Functionally, required for the insertion and/or proper folding and/or complex formation of integral membrane proteins into the membrane. Involved in integration of membrane proteins that insert both dependently and independently of the Sec translocase complex, as well as at least some lipoproteins. Aids folding of multispanning membrane proteins. The protein is Membrane protein insertase YidC of Helicobacter pylori (strain ATCC 700392 / 26695) (Campylobacter pylori).